We begin with the raw amino-acid sequence, 763 residues long: Forkhead box protein M1 (763 aa).

Positions M1–S53 are disordered. A compositionally biased stretch (polar residues) spans P36–E45. Residues K163, K201, and K325 each participate in a glycyl lysine isopeptide (Lys-Gly) (interchain with G-Cter in SUMO2) cross-link. The disordered stretch occupies residues R198–S232. The segment covering I200–S223 has biased composition (basic and acidic residues). Residues E235–L327 constitute a DNA-binding region (fork-head). The segment at P329–R351 is disordered. A Phosphoserine modification is found at S331. Residues E336–R351 show a composition bias toward basic and acidic residues. Residue K356 forms a Glycyl lysine isopeptide (Lys-Gly) (interchain with G-Cter in SUMO2) linkage. The residue at position 376 (S376) is a Phosphoserine; by CHEK2. Residues K422 and K440 each participate in a glycyl lysine isopeptide (Lys-Gly) (interchain with G-Cter in SUMO2) cross-link. The disordered stretch occupies residues P482–G711. S489 bears the Phosphoserine; by GSK3 mark. Basic and acidic residues predominate over residues F494–E503. At S522 the chain carries Phosphoserine. Over residues D583–Q592 the composition is skewed to polar residues. The residue at position 611 (T611) is a Phosphothreonine; by CDK1. Phosphothreonine is present on residues T620, T627, and T662. Residue S693 is modified to Phosphoserine; by CDK1. 2 positions are modified to phosphoserine; by PLK1: S730 and S739.

In terms of assembly, interacts with PINT87aa which is encoded by the circular form of the long non-coding RNA LINC-PINT; the interaction inhibits FOXM1-mediated transcription of PHB2. Post-translationally, phosphorylated in M (mitotic) phase. Phosphorylation by the checkpoint kinase CHEK2 in response to DNA damage increases the FOXM1 protein stability probably stimulating the transcription of genes involved in DNA repair. Phosphorylated by CDK1 in late S and G2 phases, creating docking sites for the POLO box domains of PLK1. Subsequently, PLK1 binds and phosphorylates FOXM1, leading to activation of transcriptional activity and subsequent enhanced expression of key mitotic regulators. Phosphorylated by GSK3B leading to ubiquitination and proteasomal degradation. Ubiquitinated in a FBXW7-dependent manner leading to proteasomal degradation. As to expression, expressed in thymus, testis, small intestine, colon followed by ovary. Appears to be expressed only in adult organs containing proliferating/cycling cells or in response to growth factors. Also expressed in epithelial cell lines derived from tumors. Not expressed in resting cells. Isoform 2 is highly expressed in testis.

It localises to the nucleus. Functionally, transcription factor regulating the expression of cell cycle genes essential for DNA replication and mitosis. Plays a role in the control of cell proliferation. Also plays a role in DNA break repair, participating in the DNA damage checkpoint response. Promotes transcription of PHB2. This chain is Forkhead box protein M1 (FOXM1), found in Homo sapiens (Human).